The primary structure comprises 37 residues: Peptide encoded by miPEP164a (37 aa).

In terms of biological role, regulatory peptide encoded by the primary transcript (pri-miR164a) of the microRNA miR164a that enhances the accumulation of its corresponding mature miRNA. Acts probably as a transcriptional activator of its corresponding pri-miRNA. The protein is Peptide encoded by miPEP164a of Arabidopsis thaliana (Mouse-ear cress).